We begin with the raw amino-acid sequence, 556 residues long: Arginine--tRNA ligase (556 aa).

A 'HIGH' region motif is present at residues Ala-132–His-142.

This sequence belongs to the class-I aminoacyl-tRNA synthetase family. In terms of assembly, monomer.

The protein resides in the cytoplasm. It catalyses the reaction tRNA(Arg) + L-arginine + ATP = L-arginyl-tRNA(Arg) + AMP + diphosphate. The polypeptide is Arginine--tRNA ligase (Listeria monocytogenes serotype 4b (strain CLIP80459)).